We begin with the raw amino-acid sequence, 429 residues long: Enolase (429 aa).

A (2R)-2-phosphoglycerate-binding site is contributed by Gln164. The active-site Proton donor is the Glu206. Asp243, Glu286, and Asp313 together coordinate Mg(2+). Lys338, Arg367, Ser368, and Lys389 together coordinate (2R)-2-phosphoglycerate. Residue Lys338 is the Proton acceptor of the active site.

The protein belongs to the enolase family. As to quaternary structure, homooctamer. Forms a ring-shaped particle. It depends on Mg(2+) as a cofactor.

It localises to the cytoplasm. The protein resides in the secreted. It is found in the cell surface. It carries out the reaction (2R)-2-phosphoglycerate = phosphoenolpyruvate + H2O. It participates in carbohydrate degradation; glycolysis; pyruvate from D-glyceraldehyde 3-phosphate: step 4/5. Its activity is regulated as follows. Inhibited by fluoride and phosphate. In terms of biological role, catalyzes the reversible conversion of 2-phosphoglycerate (2-PG) into phosphoenolpyruvate (PEP). It is essential for the degradation of carbohydrates via glycolysis. The protein is Enolase of Thermotoga maritima (strain ATCC 43589 / DSM 3109 / JCM 10099 / NBRC 100826 / MSB8).